We begin with the raw amino-acid sequence, 147 residues long: Formiminotransferase N-terminal subdomain-containing protein (147 aa).

The N-terminal stretch at 1–20 is a signal peptide; that stretch reads MSSSRVGLRLAACLLNVSEA.

It belongs to the formiminotransferase family. As to expression, widely expressed with highest levels in liver and skeletal muscle, and moderate levels in kidney, bone and pancreas.

The sequence is that of Formiminotransferase N-terminal subdomain-containing protein (FTCDNL1) from Homo sapiens (Human).